A 432-amino-acid chain; its full sequence is Probable exopolygalacturonase X (432 aa).

Residues 1–23 (MKFSYSFVQVVSLLLSLSPSVEG) form the signal peptide. N-linked (GlcNAc...) asparagine glycosylation is found at asparagine 113, asparagine 129, and asparagine 199. The PbH1 1 repeat unit spans residues 231 to 252 (SDNIVIQNSVINNGDDCVSFKP). Aspartate 245 acts as the Proton donor in catalysis. An intrachain disulfide couples cysteine 247 to cysteine 264. N-linked (GlcNAc...) asparagine glycans are attached at residues asparagine 253 and asparagine 265. 3 PbH1 repeats span residues 254-274 (STNI…SVGS), 285-306 (VQNV…RIKV), and 327-348 (VKNI…EVTQ). Residue histidine 268 is part of the active site. N-linked (GlcNAc...) asparagine glycans are attached at residues asparagine 292, asparagine 297, asparagine 329, asparagine 354, and asparagine 364. The stretch at 362–394 (PSNLTISDIHFKNFRGTTSGKRDPDVGTIVCSS) is one PbH1 5 repeat. Cysteine 392 and cysteine 398 are disulfide-bonded.

Belongs to the glycosyl hydrolase 28 family.

The protein localises to the secreted. It catalyses the reaction [(1-&gt;4)-alpha-D-galacturonosyl](n) + H2O = alpha-D-galacturonate + [(1-&gt;4)-alpha-D-galacturonosyl](n-1). Functionally, specific in hydrolyzing the terminal glycosidic bond of polygalacturonic acid and oligogalacturonates. The chain is Probable exopolygalacturonase X (pgaX) from Neosartorya fischeri (strain ATCC 1020 / DSM 3700 / CBS 544.65 / FGSC A1164 / JCM 1740 / NRRL 181 / WB 181) (Aspergillus fischerianus).